The following is a 171-amino-acid chain: Putative charged multivesicular body protein 4B-like protein CHMP4BP1 (171 aa).

The span at 1-17 (MLSKKQEFLEKKIEQRH) shows a compositional bias: basic and acidic residues. Disordered regions lie at residues 1 to 24 (MLSK…NKPA) and 132 to 171 (EQEE…KTTT).

Belongs to the SNF7 family.

The protein is Putative charged multivesicular body protein 4B-like protein CHMP4BP1 (CHMP4BP1) of Homo sapiens (Human).